We begin with the raw amino-acid sequence, 195 residues long: Interferon tau-1 (195 aa).

The first 23 residues, 1-23 (MAFVLSLLMALVLVSYGPGGSLG), serve as a signal peptide directing secretion. 2 cysteine pairs are disulfide-bonded: Cys24/Cys122 and Cys52/Cys162.

This sequence belongs to the alpha/beta interferon family. IFN-alphaII subfamily. As to expression, constitutively and exclusively expressed in the mononuclear cells of the extraembryonic trophectoderm.

It is found in the secreted. Paracrine hormone primarily responsible for maternal recognition of pregnancy. Interacts with endometrial receptors, probably type I interferon receptors, and blocks estrogen receptor expression, preventing the estrogen-induced increase in oxytocin receptor expression in the endometrium. This results in the suppression of the pulsatile endometrial release of the luteolytic hormone prostaglandin F2-alpha, hindering the regression of the corpus luteum (luteolysis) and therefore a return to ovarian cyclicity. This, and a possible direct effect of IFN-tau on prostaglandin synthesis, leads in turn to continued ovarian progesterone secretion, which stimulates the secretion by the endometrium of the nutrients required for the growth of the conceptus. In summary, displays particularly high antiviral and antiproliferative potency concurrently with particular weak cytotoxicity, high antiluteolytic activity and immunomodulatory properties. In contrast with other IFNs, IFN-tau is not virally inducible. The chain is Interferon tau-1 (IFNT1) from Ovis aries (Sheep).